Reading from the N-terminus, the 146-residue chain is Small ribosomal subunit protein eS19 (146 aa).

It belongs to the eukaryotic ribosomal protein eS19 family.

The protein is Small ribosomal subunit protein eS19 (RPS19A) of Oryza sativa subsp. japonica (Rice).